The sequence spans 64 residues: Antimicrobial peptide THP2 (64 aa).

The N-terminal stretch at Met1–Met28 is a signal peptide. 3 cysteine pairs are disulfide-bonded: Cys31–Cys57, Cys36–Cys51, and Cys41–Cys58.

In terms of tissue distribution, expressed in circulating heterophil granulocytes and bone marrow (at protein level).

The protein resides in the secreted. Functionally, antibacterial activity against the Gram-positive bacterium Staphylococcus aureus. Lacks antibacterial activity against the Gram-negative bacterium E.coli K-12. This is Antimicrobial peptide THP2 from Meleagris gallopavo (Wild turkey).